A 196-amino-acid chain; its full sequence is Molybdenum cofactor guanylyltransferase (196 aa).

Residues 10 to 12, Lys23, Asn51, Asp69, and Asp99 each bind GTP; that span reads LAG. Position 99 (Asp99) interacts with Mg(2+).

Belongs to the MobA family. In terms of assembly, monomer. Mg(2+) is required as a cofactor.

The protein localises to the cytoplasm. The catalysed reaction is Mo-molybdopterin + GTP + H(+) = Mo-molybdopterin guanine dinucleotide + diphosphate. Functionally, transfers a GMP moiety from GTP to Mo-molybdopterin (Mo-MPT) cofactor (Moco or molybdenum cofactor) to form Mo-molybdopterin guanine dinucleotide (Mo-MGD) cofactor. In Shewanella frigidimarina (strain NCIMB 400), this protein is Molybdenum cofactor guanylyltransferase.